A 281-amino-acid chain; its full sequence is uncharacterized protein (281 aa).

3 helical membrane-spanning segments follow: residues 23 to 45 (LLLSYIINLISSIIILIIGFFAA), 65 to 87 (IANFLAALVRYIIITFALIASLG), and 94 to 116 (TSVIAILGAAGMAIGLALQGSLS).

It belongs to the MscS (TC 1.A.23) family.

The protein localises to the cell membrane. This is an uncharacterized protein from Buchnera aphidicola subsp. Baizongia pistaciae (strain Bp).